The primary structure comprises 249 residues: 2,3-bisphosphoglycerate-dependent phosphoglycerate mutase (249 aa).

Residues 8–15, 21–22, Arg60, 87–90, Lys98, 114–115, and 183–184 contribute to the substrate site; these read RHGESVWN, TG, ERHY, RR, and GN. Residue His9 is the Tele-phosphohistidine intermediate of the active site. Glu87 (proton donor/acceptor) is an active-site residue.

This sequence belongs to the phosphoglycerate mutase family. BPG-dependent PGAM subfamily.

It catalyses the reaction (2R)-2-phosphoglycerate = (2R)-3-phosphoglycerate. It participates in carbohydrate degradation; glycolysis; pyruvate from D-glyceraldehyde 3-phosphate: step 3/5. Its function is as follows. Catalyzes the interconversion of 2-phosphoglycerate and 3-phosphoglycerate. The protein is 2,3-bisphosphoglycerate-dependent phosphoglycerate mutase of Chloroherpeton thalassium (strain ATCC 35110 / GB-78).